We begin with the raw amino-acid sequence, 265 residues long: Speedy protein E13 (265 aa).

The disordered stretch occupies residues 1–80 (MGQILGKIMM…EPEKELAPEP (80 aa)). Over residues 66–80 (DESDDEPEKELAPEP) the composition is skewed to acidic residues.

It belongs to the Speedy/Ringo family.

The protein is Speedy protein E13 of Homo sapiens (Human).